A 158-amino-acid polypeptide reads, in one-letter code: C-type lectin galactose-binding isoform (158 aa).

The signal sequence occupies residues 1-23 (MGRFLLVTLSLLVMAFFLNGANS). 3 disulfide bridges follow: Cys26–Cys37, Cys54–Cys154, and Cys129–Cys146. In terms of domain architecture, C-type lectin spans 33–155 (RNGFCYKVFN…CTALRPFLCQ (123 aa)). Gln119, Asp121, and Glu127 together coordinate Ca(2+). Positions 119–121 (QPD) match the Galactose-binding motif. The N-linked (GlcNAc...) asparagine glycan is linked to Asn134. Residues Asn142 and Asp143 each coordinate Ca(2+).

Belongs to the true venom lectin family. Dimer. Probably disulfide-linked homodimer. In terms of tissue distribution, expressed by the venom gland.

The protein resides in the secreted. Galactose-binding lectin that binds to and agglutinates erythrocytes in a calcium-dependent manner. The chain is C-type lectin galactose-binding isoform from Pseudechis australis (Mulga snake).